Here is a 175-residue protein sequence, read N- to C-terminus: Phytochrome-interacting ankyrin-repeat protein 1 (175 aa).

ANK repeat units lie at residues 30–59, 67–96, and 102–131; these read RGWT…DVNA, KGMT…NMEA, and CGWT…FLPD.

As to quaternary structure, interacts with phytochrome A (PHYA), both in Pr and Pfr forms.

It is found in the cytoplasm. Its subcellular location is the nucleus. The protein localises to the mitochondrion. This is Phytochrome-interacting ankyrin-repeat protein 1 from Arabidopsis thaliana (Mouse-ear cress).